The primary structure comprises 1153 residues: Error-prone DNA polymerase (1153 aa).

Positions 1107-1153 are disordered; that stretch reads DELIAPSASTEREAPLNDDRRDHPDLPAQQIRHPRNVRILPPSRDFH. Residues 1116–1131 show a composition bias toward basic and acidic residues; it reads TEREAPLNDDRRDHPD.

It belongs to the DNA polymerase type-C family. DnaE2 subfamily.

Its subcellular location is the cytoplasm. It carries out the reaction DNA(n) + a 2'-deoxyribonucleoside 5'-triphosphate = DNA(n+1) + diphosphate. Its function is as follows. DNA polymerase involved in damage-induced mutagenesis and translesion synthesis (TLS). It is not the major replicative DNA polymerase. This chain is Error-prone DNA polymerase, found in Rhodopseudomonas palustris (strain BisA53).